The following is a 402-amino-acid chain: Zinc finger CCHC domain-containing protein 12 (402 aa).

Residues 268–277 show a composition bias toward acidic residues; sequence DTPDDSDEDV. Residues 268 to 342 are disordered; the sequence is DTPDDSDEDV…PGNMRRTRKR (75 aa). Residues 311–323 show a composition bias toward polar residues; it reads SPNNSQFPSPCTS. Residues 346–363 form a CCHC-type zinc finger; the sequence is IRCSYCGEEGHSKETCDN. The span at 383-392 shows a compositional bias: basic and acidic residues; sequence HTEERSREAP. The interval 383 to 402 is disordered; sequence HTEERSREAPVEPSDPCELQ.

It belongs to the ZCCHC12 family. In terms of assembly, interacts with SMAD1 and CREB-binding protein (CBP). Forms a protein-DNA complex through its association with SMAD1.

Its function is as follows. Transcriptional coactivator in the bone morphogenetic protein (BMP)-signaling pathway. It positively modulates BMP signaling by interacting with SMAD1 and associating with CBP in the transcription complex. It contributes to the BMP-induced enhancement of cholinergic-neuron-specific gene expression. The chain is Zinc finger CCHC domain-containing protein 12 (ZCCHC12) from Bos taurus (Bovine).